The following is a 286-amino-acid chain: 4-diphosphocytidyl-2-C-methyl-D-erythritol kinase (286 aa).

The active site involves Lys13. ATP is bound at residue 101 to 111 (PQGAGLGGGSS). Residue Asp143 is part of the active site.

It belongs to the GHMP kinase family. IspE subfamily.

The enzyme catalyses 4-CDP-2-C-methyl-D-erythritol + ATP = 4-CDP-2-C-methyl-D-erythritol 2-phosphate + ADP + H(+). Its pathway is isoprenoid biosynthesis; isopentenyl diphosphate biosynthesis via DXP pathway; isopentenyl diphosphate from 1-deoxy-D-xylulose 5-phosphate: step 3/6. Functionally, catalyzes the phosphorylation of the position 2 hydroxy group of 4-diphosphocytidyl-2C-methyl-D-erythritol. This chain is 4-diphosphocytidyl-2-C-methyl-D-erythritol kinase, found in Idiomarina loihiensis (strain ATCC BAA-735 / DSM 15497 / L2-TR).